The sequence spans 383 residues: Microtubule-associated protein tau (383 aa).

Residues 1–27 (MAEPRQEFDVMEDHAGTYGLGDRKDQE) are compositionally biased toward basic and acidic residues. The disordered stretch occupies residues 1–198 (MAEPRQEFDV…PVPMPDLKNV (198 aa)). An N-acetylalanine modification is found at alanine 2. Residues tyrosine 18 and tyrosine 29 each carry the phosphotyrosine modification. A Glycyl lysine isopeptide (Lys-Gly) (interchain with G-Cter in ubiquitin) cross-link involves residue lysine 44. Position 53 is a phosphothreonine (threonine 53). Residues 72-91 (KSKDGTGSDDKKAKGADGKT) are compositionally biased toward basic and acidic residues. A Phosphothreonine modification is found at threonine 95. Arginine 97 carries the post-translational modification Omega-N-methylarginine. Lysine 105 is modified (N6,N6-dimethyllysine; alternate). Position 105 is an N6-acetyllysine; alternate (lysine 105). A phosphothreonine mark is found at threonine 111, threonine 117, and threonine 123. The span at 116–128 (KTPPAPKTPPSSG) shows a compositional bias: pro residues. Phosphoserine occurs at positions 127, 133, and 137. Residues 129–156 (EPPKSGDRSGYSSPGSPGTPGSRSRTPS) show a composition bias toward low complexity. Residue tyrosine 139 is modified to Phosphotyrosine. Phosphoserine occurs at positions 140, 141, and 144. Phosphothreonine is present on residues threonine 147 and threonine 154. Serine 156 bears the Phosphoserine mark. Threonine 159 carries the post-translational modification Phosphothreonine. N6-acetyllysine is present on lysine 167. Threonine 173 bears the Phosphothreonine mark. Serine 177 and serine 179 each carry phosphoserine. 4 Tau/MAP repeats span residues 186–216 (QTAPVPMPDLKNVKSKIGSTENLKHQPGGGK), 217–247 (VQIINKKLDLSNVQSKCGSKDNIKHVPGGGS), 248–278 (VQIVYKPVDLSKVTSKCGSLGNIHHKPGGGQ), and 279–310 (VEVKSEKLDFKDRVQSKIGSLDNITHVPGGGN). A Glycyl lysine isopeptide (Lys-Gly) (interchain with G-Cter in ubiquitin) cross-link involves residue lysine 196. N6-acetyllysine; alternate is present on lysine 201. Lysine 201 carries the N6-methyllysine; alternate modification. Residue lysine 201 forms a Glycyl lysine isopeptide (Lys-Gly) (interchain with G-Cter in ubiquitin); alternate linkage. Position 204 is a phosphoserine (serine 204). Lysine 209 is covalently cross-linked (Glycyl lysine isopeptide (Lys-Gly) (interchain with G-Cter in ubiquitin)). N6-acetyllysine; alternate is present on lysine 223. Lysine 223 is covalently cross-linked (Glycyl lysine isopeptide (Lys-Gly) (interchain with G-Cter in ubiquitin); alternate). Phosphoserine occurs at positions 227 and 231. Lysine 232 carries the N6-acetyllysine modification. Residues cysteine 233 and cysteine 264 are joined by a disulfide bond. Serine 235 is modified (phosphoserine). At lysine 240 the chain carries N6-acetyllysine; alternate. Lysine 240 is covalently cross-linked (Glycyl lysine isopeptide (Lys-Gly) (interchain with G-Cter in ubiquitin); alternate). Position 247 is a phosphoserine (serine 247). At lysine 253 the chain carries N6,N6-dimethyllysine; alternate. Lysine 253, lysine 259, and lysine 263 each carry N6-acetyllysine; alternate. Glycyl lysine isopeptide (Lys-Gly) (interchain with G-Cter in ubiquitin); alternate cross-links involve residues lysine 253, lysine 259, and lysine 263. Serine 266 carries the post-translational modification Phosphoserine. Lysine 273, lysine 285, and lysine 289 each carry N6-acetyllysine; alternate. Residues lysine 273, lysine 285, and lysine 289 each participate in a glycyl lysine isopeptide (Lys-Gly) (interchain with G-Cter in ubiquitin); alternate cross-link. Arginine 291 is subject to Omega-N-methylarginine. Position 294 is a phosphoserine (serine 294). A Glycyl lysine isopeptide (Lys-Gly) (interchain with G-Cter in ubiquitin) cross-link involves residue lysine 295. Serine 298 carries the phosphoserine modification. The residue at position 311 (lysine 311) is an N6-acetyllysine; alternate. A Glycyl lysine isopeptide (Lys-Gly) (interchain with G-Cter in ubiquitin); alternate cross-link involves residue lysine 311. Lysine 317 participates in a covalent cross-link: Glycyl lysine isopeptide (Lys-Gly) (interchain with G-Cter in ubiquitin). Lysine 327 carries the N6-acetyllysine; alternate modification. Lysine 327 is covalently cross-linked (Glycyl lysine isopeptide (Lys-Gly) (interchain with G-Cter in ubiquitin); alternate). Tyrosine 336 carries the phosphotyrosine modification. Residues serine 338 and serine 342 each carry the phosphoserine modification. The segment at 340–359 (VVSGDTSPRHLSNVSSTGSI) is disordered. The segment covering 343-358 (GDTSPRHLSNVSSTGS) has biased composition (polar residues). Position 345 is a phosphothreonine (threonine 345). Residues serine 346, serine 351, serine 358, and serine 364 each carry the phosphoserine modification. Threonine 369 is subject to Phosphothreonine.

In terms of assembly, interacts with MARK1, MARK2, MARK3 and MARK4. Interacts with SQSTM1 when polyubiquitinated. Interacts with PSMC2 through SQSTM1. Interacts with FKBP4. Binds to CSNK1D. Interacts with SGK1. Interacts with PIN1. Interacts with LRRK2. Interacts with LRP1, leading to endocytosis; this interaction is reduced in the presence of LRPAP1/RAP. Polyubiquitinated. Requires functional TRAF6 and may provoke SQSTM1-dependent degradation by the proteasome. In terms of processing, phosphorylation at various serine and threonine residues in S-P or T-P motifs by proline-directed protein kinases (PDPK1, CDK1, CDK5, GSK3, MAPK) (a few sites per protein in interphase, more in mitosis), and at serine residues in K-X-G-S motifs by MAP/microtubule affinity-regulating kinase (MARK1, MARK2, MARK3 or MARK4), causing detachment from microtubules, and their disassembly. Phosphorylation at Ser-204 by BRSK1 and BRSK2 in neurons affects ability to bind microtubules and plays a role in neuron polarization. Phosphorylated by PHK. Dephosphorylation at several serine and threonine residues by the serine/threonine phosphatase PPP5C. As to expression, expressed in neurons.

It localises to the cytoplasm. The protein resides in the cytosol. The protein localises to the cell membrane. Its subcellular location is the cytoskeleton. It is found in the cell projection. It localises to the axon. The protein resides in the dendrite. Functionally, promotes microtubule assembly and stability, and might be involved in the establishment and maintenance of neuronal polarity. The C-terminus binds axonal microtubules while the N-terminus binds neural plasma membrane components, suggesting that tau functions as a linker protein between both. Axonal polarity is predetermined by tau localization (in the neuronal cell) in the domain of the cell body defined by the centrosome. The polypeptide is Microtubule-associated protein tau (MAPT) (Papio hamadryas (Hamadryas baboon)).